The following is a 222-amino-acid chain: MLANENSLLTMFRELGSGKLPLQIEQFERGKTIFFPGDPAERVYLLVKGAVKLSRVYESGEEITVALLRENSVFGVLSLLTGQRSDRFYHAVAFTPVQLFSVPIEFMQKALIERPELANVMLQGLSSRILQTEMMIETLAHRDMGSRLVSFLLILCRDFGIPSPDGITIDLKLSHQAIAEAIGSTRVTVTRLLGDLRESKLIAIHKKRITVFNPVALSQQFS.

Residue 6 to 128 (NSLLTMFREL…NVMLQGLSSR (123 aa)) coordinates a nucleoside 3',5'-cyclic phosphate. Residues 142–215 (RDMGSRLVSF…KKRITVFNPV (74 aa)) form the HTH crp-type domain. Positions 175–194 (HQAIAEAIGSTRVTVTRLLG) form a DNA-binding region, H-T-H motif.

Functionally, required for full expression of proteins subject to ammonium repression. Transcriptional activator of genes subject to nitrogen control. This is Global nitrogen regulator (ntcA) from Synechococcus elongatus (strain ATCC 33912 / PCC 7942 / FACHB-805) (Anacystis nidulans R2).